Here is a 293-residue protein sequence, read N- to C-terminus: Phospholipid scramblase 2 (293 aa).

Residues 1–39 (MDKQNVQMNPPHPGTNLTGPPGHIGYPGPQAGYAVPPPG) are disordered. Positions 1–66 (MDKQNVQMNP…GHPGAPTQVP (66 aa)) are proline-rich domain (PRD). The Cytoplasmic segment spans residues 1–270 (MDKQNVQMNP…IQFPLDLDVK (270 aa)). Phosphothreonine; by PKC is present on Thr-143. Residues Cys-166, Cys-167, Cys-170, and Cys-171 are each lipidated (S-palmitoyl cysteine). A helical transmembrane segment spans residues 271–287 (MKAVMLGACFLIDFMFF). At 288–293 (EMTRGE) the chain is on the extracellular side.

Belongs to the phospholipid scramblase family. Requires Ca(2+) as cofactor.

The protein resides in the membrane. It catalyses the reaction a 1,2-diacyl-sn-glycero-3-phosphocholine(in) = a 1,2-diacyl-sn-glycero-3-phosphocholine(out). Its function is as follows. May catalyze calcium-induced ATP-independent rapid bidirectional and non-specific movement of phospholipids (lipid scrambling or lipid flip-flop) between the inner and outer leaflet of the plasma membrane. In Bos taurus (Bovine), this protein is Phospholipid scramblase 2.